The chain runs to 221 residues: Urease accessory protein UreG (221 aa).

Position 19–26 (19–26 (GPVGSGKT)) interacts with GTP.

This sequence belongs to the SIMIBI class G3E GTPase family. UreG subfamily. As to quaternary structure, homodimer. UreD, UreF and UreG form a complex that acts as a GTP-hydrolysis-dependent molecular chaperone, activating the urease apoprotein by helping to assemble the nickel containing metallocenter of UreC. The UreE protein probably delivers the nickel.

It localises to the cytoplasm. Functionally, facilitates the functional incorporation of the urease nickel metallocenter. This process requires GTP hydrolysis, probably effectuated by UreG. Its function is as follows. Expression of the urease operon increases the likelihood of bacterial survival by contributing to acid resistance in vitro and in vivo in BALB/c mice. Y.enterocolitica enters the body via an oral path and must survive the acidic stomach before being able to colonize the intestinal mucosa. The chain is Urease accessory protein UreG from Yersinia enterocolitica.